The sequence spans 198 residues: Phosphoheptose isomerase (198 aa).

Residues 36-198 enclose the SIS domain; sequence MARALGADRK…DRTLFGGPGG (163 aa). 51–53 serves as a coordination point for substrate; sequence NGG. Residues H60 and E64 each coordinate Zn(2+). Substrate is bound by residues E64, 93–94, 119–121, S124, and Q174; these read ND and STS. Q174 and H182 together coordinate Zn(2+).

This sequence belongs to the SIS family. GmhA subfamily. Homotetramer. The cofactor is Zn(2+).

It is found in the cytoplasm. It catalyses the reaction 2 D-sedoheptulose 7-phosphate = D-glycero-alpha-D-manno-heptose 7-phosphate + D-glycero-beta-D-manno-heptose 7-phosphate. Its pathway is carbohydrate biosynthesis; D-glycero-D-manno-heptose 7-phosphate biosynthesis; D-glycero-alpha-D-manno-heptose 7-phosphate and D-glycero-beta-D-manno-heptose 7-phosphate from sedoheptulose 7-phosphate: step 1/1. Its function is as follows. Catalyzes the isomerization of sedoheptulose 7-phosphate in D-glycero-D-manno-heptose 7-phosphate. The chain is Phosphoheptose isomerase from Halorhodospira halophila (strain DSM 244 / SL1) (Ectothiorhodospira halophila (strain DSM 244 / SL1)).